Reading from the N-terminus, the 126-residue chain is uncharacterized protein (126 aa).

The tract at residues 83-126 is disordered; it reads VPPPLDRSHESPEEFFPPQNRNRGGGPKAQIQRHPPEALEKTTH. A compositionally biased stretch (basic and acidic residues) spans 116 to 126; sequence HPPEALEKTTH.

This is an uncharacterized protein from Galliformes (FAdV-1).